Here is a 448-residue protein sequence, read N- to C-terminus: Antizyme inhibitor 1 (448 aa).

The protein belongs to the Orn/Lys/Arg decarboxylase class-II family. ODC antizyme inhibitor subfamily. In terms of assembly, monomer. Interacts with OAZ1 and OAZ3; this interaction disrupts the interaction between the antizyme and ODC1. In terms of processing, ubiquitinated, leading to its proteasomal degradation; a process that is reduced in presence of antizyme OAZ1.

Its subcellular location is the nucleus. Its function is as follows. Antizyme inhibitor (AZI) protein that positively regulates ornithine decarboxylase (ODC) activity and polyamine uptake. AZI is an enzymatically inactive ODC homolog that counteracts the negative effect of ODC antizymes (AZs) OAZ1, OAZ2 and OAZ3 on ODC activity by competing with ODC for antizyme-binding. Inhibits antizyme-dependent ODC degradation and releases ODC monomers from their inactive complex with antizymes, leading to formation of the catalytically active ODC homodimer and restoring polyamine production. This is Antizyme inhibitor 1 (AZIN1) from Pongo abelii (Sumatran orangutan).